The primary structure comprises 334 residues: Biotin synthase (334 aa).

The Radical SAM core domain maps to 55–280 (EEIEVEGIIS…HTMLRFAGGR (226 aa)). Cysteine 70, cysteine 74, and cysteine 77 together coordinate [4Fe-4S] cluster. The [2Fe-2S] cluster site is built by cysteine 113, cysteine 205, and arginine 275.

It belongs to the radical SAM superfamily. Biotin synthase family. Homodimer. It depends on [4Fe-4S] cluster as a cofactor. The cofactor is [2Fe-2S] cluster.

It catalyses the reaction (4R,5S)-dethiobiotin + (sulfur carrier)-SH + 2 reduced [2Fe-2S]-[ferredoxin] + 2 S-adenosyl-L-methionine = (sulfur carrier)-H + biotin + 2 5'-deoxyadenosine + 2 L-methionine + 2 oxidized [2Fe-2S]-[ferredoxin]. The protein operates within cofactor biosynthesis; biotin biosynthesis; biotin from 7,8-diaminononanoate: step 2/2. In terms of biological role, catalyzes the conversion of dethiobiotin (DTB) to biotin by the insertion of a sulfur atom into dethiobiotin via a radical-based mechanism. This is Biotin synthase from Corynebacterium glutamicum (strain R).